The chain runs to 1180 residues: MTGQLIQYGRHRKRRSYARISEILELPNLIEIQTKSYDWFLKEGLIEMFKDISPIEDFTGNLSLEFVDYKLGEPKYDLDESKNRDATYAAPLRVKVRLIIKETGEVKEQEVFMGDFPLMTDTGTFVINGAERVIVSQLVRSPSVYFNDKVDKNGKVSFGATVIPNRGAWLEYETDAKDVVFVRIDRTRKLPITVLLRALGFSTDQEIIDLLGDNEYLRNALDKDNTESTEAALLEIYERLRPGEPPTVENAKSLLYSRFFDPKRYDLASVGRYKMNKKLHLKHRLFNQVLAEPIVNTETGEIVAEEGTLLDRRNLDQIIDVLESNANQKVYDLDNGLLDEPIEIQSVKVYVPGDEEKRTTTIIGNAFPDDEVKCITPADILSSVSYFFNLLAGVGFTDDIDHLGNRRLRSVGELLQNQFRIGLSRMERVVRERMSLQDTESVTPQQLINIRPVIASIKEFFGSSQLSQFMDQANPLAELTHKRRLSALGPGGLTRERAGMEVRDVHYSHYGRMCPIETPEGPNIGLINSLSSYARVNEFGFIETPYRKVDIETNTVTSQIDYLTADEEDAYVVAQANARLDDNGKFLDDEVVCRFRGDNTVMARERMDYMDVSPKQVVSAATACIPFLENDDSNRALMGANMQRQAVPLMNPEAPFVGTGMEHVAARDSGAAVVAKYKGRVEHVEARQIKVRRIVEEGGKEIETDLDVYKLAKFARSNSGTCYNQRPIVEAGNIVTKGEILADGPSMELGEMALGRNVVVGFMTWDGYNYEDAVIMSERLVKDDVYTSIHIEEYESEARDTKLGPEEITRDIPNVSDNALKNLDDRGIIFVGAEVRDGDILVGKVTPKGVTELTAEERLLHAIFGEKAREVRDTSLRVPHGADGIVLDVKVFNREDGDELPPGVNQLVRVYIVQKRKIHVGDKMCGRHGNKGVISRILPEEDMPFMPDGTPIDIMLNPLGVPSRMNIGQVLELHLGMAAKNLGLHVASPVFDGANDEDVWSTIEEAGMARDGKTVLYDGRTGEPFDNRVSVGVMYMLKLAHMVDDKLHARSTGPYSLVTQQPLGGKAQFGGQRFGEMEVWALEAYGAAYTLQEILTYKSDDTVGRVKTYEAIVKGENIPRPGVPESFRVLMKELQSLGLDVKVMDNKDEEIEMRDLEDDDFVDSKINIAKAPMPEAEITE.

Belongs to the RNA polymerase beta chain family. In terms of assembly, the RNAP catalytic core consists of 2 alpha, 1 beta, 1 beta' and 1 omega subunit. When a sigma factor is associated with the core the holoenzyme is formed, which can initiate transcription.

The catalysed reaction is RNA(n) + a ribonucleoside 5'-triphosphate = RNA(n+1) + diphosphate. Functionally, DNA-dependent RNA polymerase catalyzes the transcription of DNA into RNA using the four ribonucleoside triphosphates as substrates. The chain is DNA-directed RNA polymerase subunit beta from Macrococcus caseolyticus (strain JCSC5402) (Macrococcoides caseolyticum).